Here is a 426-residue protein sequence, read N- to C-terminus: Serine protease HTRA2, mitochondrial (426 aa).

The N-terminal 30 residues, 1–30, are a transit peptide targeting the mitochondrion; sequence MALRGSHRLDDFIRRCSALTLFHSQAPSRR. The disordered stretch occupies residues 30–59; it reads RVSHCGRDRRQQQDPPGQGRQEQQESGGGH. A propeptide spanning residues 31–78 is cleaved from the precursor; it reads VSHCGRDRRQQQDPPGQGRQEQQESGGGHWSRFGWRSLIRFFVPFSLG. Positions 42 to 54 are enriched in low complexity; sequence QDPPGQGRQEQQE. A helical transmembrane segment spans residues 68-86; it reads LIRFFVPFSLGAVASSLVI. An IAP-binding motif is present at residues 79–82; the sequence is AVAS. The tract at residues 143–306 is serine protease; it reads SNGSGFIIEQ…IPIDYVKVFL (164 aa). Catalysis depends on charge relay system residues H161, D193, and S270. The 86-residue stretch at 329 to 414 folds into the PDZ domain; sequence MGITMLTLTP…HLDIVILRGV (86 aa).

Belongs to the peptidase S1C family. As to quaternary structure, interacts with th/DIAP1 (via BIR 2 domain).

It is found in the mitochondrion intermembrane space. It localises to the mitochondrion membrane. The enzyme catalyses Cleavage of non-polar aliphatic amino-acids at the P1 position, with a preference for Val, Ile and Met. At the P2 and P3 positions, Arg is selected most strongly with a secondary preference for other hydrophilic residues.. Functionally, serine protease that shows proteolytic activity against a non-specific substrate beta-casein. Promotes or induces cell death either by direct binding to and inhibition of BIRC proteins (also called inhibitor of apoptosis proteins, IAPs), leading to an increase in caspase activity, or by a BIRC inhibition-independent, caspase-independent and serine protease activity-dependent mechanism. Can antagonize antiapoptotic activity of th/Diap1 by directly inducing the degradation of th/Diap1. The chain is Serine protease HTRA2, mitochondrial from Drosophila ananassae (Fruit fly).